The following is a 597-amino-acid chain: Elongation factor 4 (597 aa).

In terms of domain architecture, tr-type G spans 2–184 (KNIRNFSIIA…EIVHKIPAPE (183 aa)). Residues 14–19 (DHGKST) and 131–134 (NKID) each bind GTP.

Belongs to the TRAFAC class translation factor GTPase superfamily. Classic translation factor GTPase family. LepA subfamily.

The protein resides in the cell inner membrane. The catalysed reaction is GTP + H2O = GDP + phosphate + H(+). In terms of biological role, required for accurate and efficient protein synthesis under certain stress conditions. May act as a fidelity factor of the translation reaction, by catalyzing a one-codon backward translocation of tRNAs on improperly translocated ribosomes. Back-translocation proceeds from a post-translocation (POST) complex to a pre-translocation (PRE) complex, thus giving elongation factor G a second chance to translocate the tRNAs correctly. Binds to ribosomes in a GTP-dependent manner. In Actinobacillus succinogenes (strain ATCC 55618 / DSM 22257 / CCUG 43843 / 130Z), this protein is Elongation factor 4.